The primary structure comprises 291 residues: Glutathione S-transferase 2 (291 aa).

Residues 2–83 enclose the GST N-terminal domain; sequence SPVKVFGHPM…YILRKYGGTA (82 aa). Residues 41 to 42, 54 to 55, and 67 to 68 each bind glutathione; these read HK, KM, and KS. The 131-residue stretch at 93–223 folds into the GST C-terminal domain; that stretch reads GIEELAMVDV…RVCKHMPTEF (131 aa).

This sequence belongs to the GST superfamily. Phi family.

The catalysed reaction is RX + glutathione = an S-substituted glutathione + a halide anion + H(+). Functionally, conjugation of reduced glutathione to a wide number of exogenous and endogenous hydrophobic electrophiles. This chain is Glutathione S-transferase 2 (GSTA2), found in Triticum aestivum (Wheat).